Here is a 151-residue protein sequence, read N- to C-terminus: Transcriptional repressor NrdR (151 aa).

The segment at 3 to 34 (CPFCHNDQSRVIDSRVIDSGSAIRRRRECTQC) is a zinc-finger region. Residues 46-136 (LLVVKRNGLT…VYKSFESADD (91 aa)) form the ATP-cone domain.

This sequence belongs to the NrdR family. Requires Zn(2+) as cofactor.

In terms of biological role, negatively regulates transcription of bacterial ribonucleotide reductase nrd genes and operons by binding to NrdR-boxes. This is Transcriptional repressor NrdR from Corynebacterium diphtheriae (strain ATCC 700971 / NCTC 13129 / Biotype gravis).